The following is a 314-amino-acid chain: Electron transfer flavoprotein subunit alpha (314 aa).

Position 253-281 (L253–D281) interacts with FAD.

Belongs to the ETF alpha-subunit/FixB family. Heterodimer of an alpha and a beta subunit. Requires FAD as cofactor.

Its function is as follows. The electron transfer flavoprotein serves as a specific electron acceptor for other dehydrogenases. It transfers the electrons to the main respiratory chain via ETF-ubiquinone oxidoreductase (ETF dehydrogenase). This chain is Electron transfer flavoprotein subunit alpha (etfA), found in Bradyrhizobium diazoefficiens (strain JCM 10833 / BCRC 13528 / IAM 13628 / NBRC 14792 / USDA 110).